Reading from the N-terminus, the 655-residue chain is Macrolide export ATP-binding/permease protein MacB (655 aa).

Residues 6-244 (IELRDVWREF…DALAGDEGPE (239 aa)) form the ABC transporter domain. 42 to 49 (GASGSGKS) provides a ligand contact to ATP. The tract at residues 225–252 (DQARPDAPPLDALAGDEGPEAPRPAPQP) is disordered. Transmembrane regions (helical) follow at residues 280 to 300 (LTML…ALGA), 527 to 547 (LTLL…IGVM), 583 to 603 (VLVC…IGVL), and 620 to 640 (SMVL…FLPA).

The protein belongs to the ABC transporter superfamily. Macrolide exporter (TC 3.A.1.122) family. In terms of assembly, homodimer.

It is found in the cell inner membrane. Non-canonical ABC transporter that contains transmembrane domains (TMD), which form a pore in the inner membrane, and an ATP-binding domain (NBD), which is responsible for energy generation. Confers resistance against macrolides. The polypeptide is Macrolide export ATP-binding/permease protein MacB (Bordetella avium (strain 197N)).